The primary structure comprises 157 residues: Putative glutathione-dependent formaldehyde-activating enzyme (157 aa).

A CENP-V/GFA domain is found at 3 to 134 (LEGSCHCGAV…WVEIESREQD (132 aa)). Residues Cys-7, Cys-9, Cys-27, Cys-29, Cys-32, Cys-79, and Cys-82 each coordinate Zn(2+).

The protein belongs to the Gfa family. Zn(2+) serves as cofactor.

It carries out the reaction S-(hydroxymethyl)glutathione = glutathione + formaldehyde. It participates in one-carbon metabolism; formaldehyde degradation; formate from formaldehyde (glutathione route): step 1/3. Catalyzes the condensation of formaldehyde and glutathione to S-hydroxymethylglutathione. This is Putative glutathione-dependent formaldehyde-activating enzyme from Halomonas elongata (strain ATCC 33173 / DSM 2581 / NBRC 15536 / NCIMB 2198 / 1H9).